The primary structure comprises 619 residues: Xyloglucan galactosyltransferase MUR3 (619 aa).

The tract at residues 1 to 26 is disordered; that stretch reads MFPRVSMRRRSAEVSPTEPMEKGNGK. Residues 1 to 33 lie on the Cytoplasmic side of the membrane; it reads MFPRVSMRRRSAEVSPTEPMEKGNGKNQTNRIC. The helical; Signal-anchor for type II membrane protein transmembrane segment at 34–54 threads the bilayer; that stretch reads LLVALSLFFWALLLYFHFVVL. The Lumenal portion of the chain corresponds to 55–619; the sequence is GTSNIDKQLQ…WKSEQRDKTQ (565 aa). Residues asparagine 116, asparagine 146, asparagine 231, asparagine 257, asparagine 319, asparagine 465, and asparagine 482 are each glycosylated (N-linked (GlcNAc...) asparagine). The tract at residues 576 to 619 is disordered; sequence HVWDPFFSKPKPGEDGSSDGNGGTTISADAAKNSWKSEQRDKTQ. Basic and acidic residues predominate over residues 610–619; the sequence is WKSEQRDKTQ.

It belongs to the glycosyltransferase 47 family. As to quaternary structure, interacts with CSLC4 and FUT1. Ubiquitous.

The protein localises to the golgi apparatus. It localises to the golgi stack membrane. It is found in the golgi apparatus membrane. Involved in the attachment of the Gal residue on the third xylosyl unit within the XXXG core structure of xyloglucan, the principal glycan that interlaces the cellulose microfibrils in plant cell wall. Associates with other xyloglucan-synthesizing enzymes to form multiprotein complexes for xyloglucan synthesis in the Golgi. Interacts with actin and is required for the proper endomembrane organization and for the cell elongation. Not involved in the trafficking from the endoplasmic reticulum to the vacuoles. Involved in salt stress tolerance. Participates in the control of the expression of genes encoding for proteins involved in reactive oxygen species (ROS) detoxification under salt stress. May contribute to the maintenance of the proper organization of actin microfilaments during salt stress-induced ROS production. This Arabidopsis thaliana (Mouse-ear cress) protein is Xyloglucan galactosyltransferase MUR3.